The following is a 479-amino-acid chain: Cardiolipin synthase A (479 aa).

2 helical membrane passes run 8-28 (FFGY…LHAV) and 38-58 (IAWA…YLVF). 2 consecutive PLD phosphodiesterase domains span residues 218-245 (VNFR…GDEY) and 392-419 (QPGF…DNRS). Active-site residues include His-223, Lys-225, Asp-230, His-397, Lys-399, and Asp-404.

This sequence belongs to the phospholipase D family. Cardiolipin synthase subfamily. ClsA sub-subfamily.

The protein localises to the cell inner membrane. It catalyses the reaction 2 a 1,2-diacyl-sn-glycero-3-phospho-(1'-sn-glycerol) = a cardiolipin + glycerol. In terms of biological role, catalyzes the reversible phosphatidyl group transfer from one phosphatidylglycerol molecule to another to form cardiolipin (CL) (diphosphatidylglycerol) and glycerol. The polypeptide is Cardiolipin synthase A (Pseudomonas putida (strain W619)).